An 81-amino-acid polypeptide reads, in one-letter code: UPF0386 protein Smed_0945 (81 aa).

The protein belongs to the UPF0386 family.

The chain is UPF0386 protein Smed_0945 from Sinorhizobium medicae (strain WSM419) (Ensifer medicae).